We begin with the raw amino-acid sequence, 245 residues long: Thiopurine S-methyltransferase (245 aa).

Position 14 is a phosphoserine (Ser14). 29–40 (WQDKWVNGNTAF) lines the S-adenosyl-L-methionine pocket. Phe40 contacts substrate. Residue Lys58 is modified to N6-acetyllysine. S-adenosyl-L-methionine is bound by residues Leu69, Glu90, 134 to 135 (SI), and Arg152.

Belongs to the class I-like SAM-binding methyltransferase superfamily. TPMT family. As to quaternary structure, monomer.

Its subcellular location is the cytoplasm. It carries out the reaction S-adenosyl-L-methionine + a thiopurine = S-adenosyl-L-homocysteine + a thiopurine S-methylether.. This chain is Thiopurine S-methyltransferase (TPMT), found in Pongo pygmaeus (Bornean orangutan).